We begin with the raw amino-acid sequence, 92 residues long: Large ribosomal subunit protein bL25 (92 aa).

The protein belongs to the bacterial ribosomal protein bL25 family. Part of the 50S ribosomal subunit; part of the 5S rRNA/L5/L18/L25 subcomplex. Contacts the 5S rRNA. Binds to the 5S rRNA independently of L5 and L18.

Its function is as follows. This is one of the proteins that binds to the 5S RNA in the ribosome where it forms part of the central protuberance. This Vibrio parahaemolyticus serotype O3:K6 (strain RIMD 2210633) protein is Large ribosomal subunit protein bL25.